We begin with the raw amino-acid sequence, 391 residues long: MFKVKFYIRHAVLLLCGSLIVGCSAIPSSGPSAKKIVSLGQQSEVQIPEVELIDVNHTVAQLLYKAQINQSFTQFGDGYASAGTLNIGDVLDIMIWEAPPAVLFGGGLSSMGSGSAHQTKLPEQLVTARGTVSVPFVGDISVVGKTPGQVQEIIKGRLKKMANQPQVMVRLVQNNAANVSVIRAGNSVRMPLTAAGERVLDAVAAVGGSTANVQDTNVQLTRGNVVRTVALEDLVANPRQNILLRRGDVVTMITNPYTFTSMGAVGRTQEIGFSARGLSLSEAIGRMGGLQDRRSDARGVFVFRYTPLVELPAERQDKWIAQGYGSEAEIPTVYRVNMADAHSLFSMQRFPVKNKDVLYVSNAPLAEVQKFLSFVFSPVTSGANSINNLTN.

Residues 1–22 form the signal peptide; it reads MFKVKFYIRHAVLLLCGSLIVG. C23 carries N-palmitoyl cysteine lipidation. C23 carries S-diacylglycerol cysteine lipidation. Over 23-33 the chain is Periplasmic; it reads CSAIPSSGPSA. Residues 34–43 form a beta stranded membrane-spanning segment; that stretch reads KKIVSLGQQS. Topologically, residues 44-57 are extracellular; that stretch reads EVQIPEVELIDVNH. Residues 58–67 traverse the membrane as a beta stranded segment; that stretch reads TVAQLLYKAQ. Residues 68 to 83 lie on the Periplasmic side of the membrane; the sequence is INQSFTQFGDGYASAG. The beta stranded transmembrane segment at 84 to 93 threads the bilayer; the sequence is TLNIGDVLDI. At 94–117 the chain is on the extracellular side; that stretch reads MIWEAPPAVLFGGGLSSMGSGSAH. Residues 118-127 form a beta stranded membrane-spanning segment; sequence QTKLPEQLVT. The Periplasmic segment spans residues 128–135; that stretch reads ARGTVSVP. The chain crosses the membrane as a beta stranded span at residues 136–145; that stretch reads FVGDISVVGK. At 146–148 the chain is on the extracellular side; it reads TPG. A beta stranded transmembrane segment spans residues 149-158; the sequence is QVQEIIKGRL. Residues 159-161 are Periplasmic-facing; that stretch reads KKM. The beta stranded transmembrane segment at 162–171 threads the bilayer; sequence ANQPQVMVRL. The Extracellular segment spans residues 172–178; the sequence is VQNNAAN. Residues 179-188 traverse the membrane as a beta stranded segment; sequence VSVIRAGNSV. Residues 189–391 are Periplasmic-facing; that stretch reads RMPLTAAGER…GANSINNLTN (203 aa).

It belongs to the BexD/CtrA/VexA family.

The protein resides in the cell outer membrane. Its function is as follows. Involved in transport of capsular polysaccharides to the cell surface. May function as a membrane anchor for capsular polysaccharides. Possible porin properties. In Neisseria meningitidis serogroup B (strain ATCC BAA-335 / MC58), this protein is Capsule polysaccharide export outer membrane protein CtrA (ctrA).